Consider the following 256-residue polypeptide: 2-C-methyl-D-erythritol 4-phosphate cytidylyltransferase (256 aa).

It belongs to the IspD/TarI cytidylyltransferase family. IspD subfamily.

The enzyme catalyses 2-C-methyl-D-erythritol 4-phosphate + CTP + H(+) = 4-CDP-2-C-methyl-D-erythritol + diphosphate. Its pathway is isoprenoid biosynthesis; isopentenyl diphosphate biosynthesis via DXP pathway; isopentenyl diphosphate from 1-deoxy-D-xylulose 5-phosphate: step 2/6. Catalyzes the formation of 4-diphosphocytidyl-2-C-methyl-D-erythritol from CTP and 2-C-methyl-D-erythritol 4-phosphate (MEP). In Corynebacterium glutamicum (strain ATCC 13032 / DSM 20300 / JCM 1318 / BCRC 11384 / CCUG 27702 / LMG 3730 / NBRC 12168 / NCIMB 10025 / NRRL B-2784 / 534), this protein is 2-C-methyl-D-erythritol 4-phosphate cytidylyltransferase.